We begin with the raw amino-acid sequence, 262 residues long: Hydroxyethylthiazole kinase (262 aa).

M50 lines the substrate pocket. 2 residues coordinate ATP: R125 and T171. Position 198 (G198) interacts with substrate.

Belongs to the Thz kinase family. The cofactor is Mg(2+).

It catalyses the reaction 5-(2-hydroxyethyl)-4-methylthiazole + ATP = 4-methyl-5-(2-phosphooxyethyl)-thiazole + ADP + H(+). It functions in the pathway cofactor biosynthesis; thiamine diphosphate biosynthesis; 4-methyl-5-(2-phosphoethyl)-thiazole from 5-(2-hydroxyethyl)-4-methylthiazole: step 1/1. Catalyzes the phosphorylation of the hydroxyl group of 4-methyl-5-beta-hydroxyethylthiazole (THZ). The polypeptide is Hydroxyethylthiazole kinase (Escherichia coli (strain K12 / MC4100 / BW2952)).